Here is a 65-residue protein sequence, read N- to C-terminus: Large ribosomal subunit protein bL35 (65 aa).

This sequence belongs to the bacterial ribosomal protein bL35 family.

This Nostoc sp. (strain PCC 7120 / SAG 25.82 / UTEX 2576) protein is Large ribosomal subunit protein bL35.